A 2672-amino-acid polypeptide reads, in one-letter code: eIF-2-alpha kinase activator GCN1 (2672 aa).

HEAT repeat units follow at residues 5 to 42 (LNWEDISPVLEKGTRESHVSKRVPFLQDISQLVRQETL), 79 to 117 (NLEPCLLENFIRFISDVVISNPATKAVADYLNLLDWINS), 174 to 211 (CIFQTTVKAFLKCLKDNDDSISFMKISIKTVLESYSKL), 227 to 267 (QAAL…NPPS), 329 to 366 (FASSKLINQYFSSFKSSKEVVRSVSLQSMIILLRKISN), 372 to 410 (EDLTKLIDEIFKNIKSNLNADYKSLISKILIEIPLTHYE), 509 to 549 (HGHA…NSSI), 611 to 648 (KYVTSVLLAITSELPDKEASIKVLINALVIAQWNIFNI), 706 to 745 (IQPNEFTPILCKTIEADLTADDFSRLSEEDFEIFAGEEGV), 902 to 932 (QDYLQEPLVELLTRVLFRIKFVSNQAAIDSI), and 933 to 970 (SLTYILPLLINVLEKGKAIALKNADKPVVKAEFVEEDE). The stretch at 975 to 994 (LLLAMEIISVHAEAFEDPSI) is one HEAT 12; degenerate repeat. An HEAT 13; degenerate repeat occupies 995 to 1030 (PRISIVEVLLSLLSLPSKAKIAKDCFNALCQSISVA). 32 HEAT repeats span residues 1031–1067 (PNQEDLDMILSNLLSPNQFVRSTILETLDNEFELEPF), 1099–1138 (VVNDELLKSLFPLFNQDDSGLRLFAANAYAFGAVSLFTSE), 1185–1224 (STVAITLKIMAKAFSAEDDTVVNIIKFLVDDGGLVDREPI), 1243–1281 (QNSKDLIPIFEEALSSSTDSALKENVIILYGTLARHLQQ), 1284–1321 (ARIHTIIERLLSTLDTPSADIQQAVSACIAPLVFQFKQ), 1363–1401 (LSEFDIIRNLIEAAEDKKEPKRRESVGFCFQYLSESLGK), 1405–1442 (PYVIEILPNILKNLGDAVPEVRDATARATKAIMAHTTG), 1444–1480 (GVKKLIPVAVSNLDEIAWRTKRGSVQLLGNMAYLDPT), 1484–1521 (ASLSTIVPEIVGVLNDSHKEVRKAADESLKRFGEVIRN), 1523–1559 (EIQKLVPVLLQAIGDPTKYTEEALDSLIQTQFVHYID), 1561–1598 (PSLALIIHIIHRGMHDRSANIKRKACKIVGNMAILVDT), 1603–1640 (PYLQQLIDEVEIAMVDPVPNTRATAARALGALVERLGE), 1641–1679 (EQFPDLIPRLLDTLSDESKSGDRLGSAQALAEVISGLGL), 1681–1717 (KLDEMLPTILAGVTNFRAYIREGFMPLLLFLPVCFGS), 1721–1758 (PYINQIIQPILSGLADNDENIRDTALKAGKLIVKNYAT), 1760–1796 (AVDLLLPELERGMFDENDRIRLSSVQLTGELLFQVTG), 1825–1862 (DRRDRILAALFVCRNDTSGIVRATTVDIWKALVPNTPR), 1863–1903 (AVKE…RVGG), 1905–1942 (ALSQLLPSLEESLIETSNSDSRQGVCIALYELIESAST), 1947–1984 (QFQSTIVNIIRTALIDESATVREAAALSFDVFQDVVGK), 1985–2024 (TAVDEVLPYLLHMLESSDNSDFALLGLQEIMSKKSDVIFP), 2026–2055 (LIPTLLAPPIDAFRASALGSLAEVAGSALY), 2057–2095 (RLSIIINALVDAIIGTSEDESTKGALELALDRVFLSVND), 2097–2134 (EGLHPLLQQIMSLLKSDNIEKRIAVLERLPNFFDKTVL), 2138–2175 (VYIPNFVSHAILSLDDEDQRVVNGNFNALSTLLKKVDK), 2206–2243 (RGPNCVLPIFLHGLMYGSNDEREESALAIADVVSKTPA), 2250–2286 (VSVITGPLIRVVGERFSSDIKAAILFALNVLFIKIPM), 2290–2328 (PFIPQLQRTFVKSLSDATNETLRLRAAKALGALIEHQPR), 2347–2384 (GVKTAMLKALLEVIMKAGSKLNENSKTNIVNLVEEEML), 2392–2429 (VAYAKLIGSLSEILSNDEAHKILQDKVLNADLDGETGK), 2450–2487 (GLIDEFVSYILNAIRSPDVYFGENGTIAAGKLLLLEGE), and 2506–2546 (ENIN…FKFD). An EF3-like region region spans residues 1330-1641 (LMEKLLNPTV…GALVERLGEE (312 aa)). The interval 2207 to 2356 (GPNCVLPIFL…GVKTAMLKAL (150 aa)) is RWDBD region.

The protein belongs to the GCN1 family. In terms of assembly, interacts (via N- and C-terminus) with GCN2 (via N-terminal RWD domain); this interaction stimulates GCN2 kinase activity in a GCN20-dependent manner in response to amino acid starvation. Interacts (via C-terminus) with GCN20 (via N-terminus); this interaction stimulates GCN2 kinase activity in response to amino acid starvation. The GCN1-GCN20 complex interacts with GCN2 on translating ribosomes in amino acid-starved cells; GCN1 may bind near the ribosomal A-site and promotes the transfer of uncharged tRNAs from the A-site to the tRNA-binding domain in GCN2 for its subsequent kinase activation, and hence allowing GCN4 translational activation and derepression of amino acid biosynthetic genes. Interacts (via C-terminus) with YIH1 (via N-terminus); this interaction reduces the GCN1-GCN20 complex formation and prevents the interaction of GCN1 with GCN2 and GCN2 kinase activation in amino acid-starved cells. Interacts with GIR2; this interaction prevents the interaction of GCN1 with GCN2 and GCN2 kinase activation in amino acid-starved cells. Interacts (via middle region) with RPS10A and RPS10B; these interactions are direct and promote GCN2 kinase activation. Associates (via N-terminus) with ribosomes; this association is stimulated in a ATP- and GCN20-dependent manner and is necessary to activate GCN2 kinase activity.

Its subcellular location is the cytoplasm. Ribosome collision sensor that activates a translation quality control pathway when a ribosome has stalled during translation. Directly binds to the ribosome and acts as a sentinel for colliding ribosomes. GCN1 also acts as a positive activator of the integrated stress response (ISR) by mediating activation of GCN2 in response to low amino acid, carbon, or purine availability. Component of the GCN1-GCN20 complex that forms a complex with GCN2 on translating ribosomes: during this process, GCN1 acts as a chaperone to facilitate delivery of uncharged tRNAs that enter the A-site of ribosomes to the tRNA-binding domain of GCN2, and hence stimulating GCN2 kinase activity, leading to phosphorylation of eukaryotic translation initiation factor 2 (eIF-2-alpha/SUI2). eIF-2-alpha/SUI2 phosphorylation converts eIF-2-alpha/SUI2 into a global protein synthesis inhibitor, leading to a global attenuation of cap-dependent translation, and thus to a reduced overall utilization of amino acids, while concomitantly initiating the preferential translation of ISR-specific mRNAs, such as the transcriptional activator GCN4, and hence allowing GCN4-mediated reprogramming of amino acid biosynthetic gene expression to alleviate nutrient depletion. This chain is eIF-2-alpha kinase activator GCN1, found in Saccharomyces cerevisiae (strain ATCC 204508 / S288c) (Baker's yeast).